The sequence spans 337 residues: Thymidylate synthase (337 aa).

Residues Arg-74 and 199–200 (RR) each bind dUMP. Cys-219 acts as the Nucleophile in catalysis. Residues 239–242 (RSGD), Asn-250, and 280–282 (HIY) contribute to the dUMP site. Asp-242 serves as a coordination point for (6R)-5,10-methylene-5,6,7,8-tetrahydrofolate. (6R)-5,10-methylene-5,6,7,8-tetrahydrofolate is bound at residue Ala-336.

The protein belongs to the thymidylate synthase family. Homodimer.

It catalyses the reaction dUMP + (6R)-5,10-methylene-5,6,7,8-tetrahydrofolate = 7,8-dihydrofolate + dTMP. It functions in the pathway pyrimidine metabolism; dTTP biosynthesis. The protein is Thymidylate synthase (70) of Homo sapiens (Human).